The sequence spans 203 residues: E3 ubiquitin-protein ligase RNF152 (203 aa).

The RING-type zinc-finger motif lies at 12–55 (CQICFNYYSPRRRPKLLDCKHTCCSVCLQQMRTSQKDLRCPWCR). The helical transmembrane segment at 167-187 (SGVCTVILVACVLVFLLGIVL) threads the bilayer.

This sequence belongs to the RNF152 family.

It localises to the lysosome membrane. The catalysed reaction is S-ubiquitinyl-[E2 ubiquitin-conjugating enzyme]-L-cysteine + [acceptor protein]-L-lysine = [E2 ubiquitin-conjugating enzyme]-L-cysteine + N(6)-ubiquitinyl-[acceptor protein]-L-lysine.. It functions in the pathway protein modification; protein ubiquitination. Functionally, E3 ubiquitin-protein ligase that acts as a negative regulator of mTORC1 signaling by mediating ubiquitination of RagA/RRAGA and RHEB. Catalyzes 'Lys-63'-linked polyubiquitination of RagA/RRAGA in response to amino acid starvation, thereby regulating mTORC1 signaling. Also mediates monoubiquitination of RHEB, promoting its association with the TSC-TBC complex and subsequent inhibition. Also mediates 'Lys-48'-linked polyubiquitination of target proteins and their subsequent targeting to the proteasome for degradation. The polypeptide is E3 ubiquitin-protein ligase RNF152 (Gallus gallus (Chicken)).